Here is a 100-residue protein sequence, read N- to C-terminus: Large ribosomal subunit protein uL23 (100 aa).

This sequence belongs to the universal ribosomal protein uL23 family. Part of the 50S ribosomal subunit. Contacts protein L29, and trigger factor when it is bound to the ribosome.

Functionally, one of the early assembly proteins it binds 23S rRNA. One of the proteins that surrounds the polypeptide exit tunnel on the outside of the ribosome. Forms the main docking site for trigger factor binding to the ribosome. This is Large ribosomal subunit protein uL23 from Pseudoalteromonas atlantica (strain T6c / ATCC BAA-1087).